We begin with the raw amino-acid sequence, 130 residues long: UPF0102 protein RPE_0358 (130 aa).

This sequence belongs to the UPF0102 family.

This is UPF0102 protein RPE_0358 from Rhodopseudomonas palustris (strain BisA53).